Reading from the N-terminus, the 302-residue chain is UPF0761 membrane protein Tola_0461 (302 aa).

6 helical membrane passes run 51 to 71, 111 to 131, 150 to 170, 188 to 208, 222 to 242, and 256 to 276; these read YVSLLSIVPLLAVVFSVLSWL, TTSIGLLMLVLLALLLIAAID, ITMYSIVLGVVPLLVGGSLLL, LGGGLLELLPYLLSLGGILLL, ALLGATLAALLFEVAKEGFGY, and ALAGIPILMIWLYMSWLVVLL.

Belongs to the UPF0761 family.

Its subcellular location is the cell inner membrane. The polypeptide is UPF0761 membrane protein Tola_0461 (Tolumonas auensis (strain DSM 9187 / NBRC 110442 / TA 4)).